The following is a 239-amino-acid chain: Adapter protein MecA (239 aa).

Residues 118 to 128 (EQRTKEKEAQG) are compositionally biased toward basic and acidic residues. Residues 118 to 137 (EQRTKEKEAQGSKRQKSSAR) form a disordered region.

This sequence belongs to the MecA family. As to quaternary structure, homodimer.

Functionally, enables the recognition and targeting of unfolded and aggregated proteins to the ClpC protease or to other proteins involved in proteolysis. The sequence is that of Adapter protein MecA from Staphylococcus aureus (strain COL).